The following is a 1607-amino-acid chain: Dicer-like protein 1 (1607 aa).

The disordered stretch occupies residues 1-74 (MNAEMREGSS…PDTKKWIVND (74 aa)). Residues 142-324 (LFERAKTQNT…IARSPELEGL (183 aa)) enclose the Helicase ATP-binding domain. ATP is bound at residue 155–162 (LDTGSGKT). The DEAH box signature appears at 267–270 (DEAH). The 172-residue stretch at 461-632 (KVVILLRILR…EALPADRKLT (172 aa)) folds into the Helicase C-terminal domain. The Dicer dsRNA-binding fold domain maps to 665 to 755 (SLICLAAFVA…RPTFTKQLPA (91 aa)). One can recognise a PAZ domain in the interval 905-1040 (GAVTFVRDNE…IVLEPLRISP (136 aa)). RNase III domains are found at residues 1063–1219 (LVAL…LTAQ) and 1272–1447 (AARF…VDSR). Residues E1312, D1433, and E1436 each contribute to the Mg(2+) site. A DRBM domain is found at 1478–1556 (HPVTFLAGIM…AKKAIQVLEG (79 aa)). 4 residues coordinate Zn(2+): C1493, H1527, C1568, and C1570.

It belongs to the helicase family. Dicer subfamily. Requires Mg(2+) as cofactor. Mn(2+) serves as cofactor.

Dicer-like endonuclease involved in cleaving double-stranded RNA in the RNA interference (RNAi) pathway. Produces 21 to 25 bp dsRNAs (siRNAs) which target the selective destruction of homologous RNAs leading to sequence-specific suppression of gene expression, called post-transcriptional gene silencing (PTGS). Part of a broad host defense response against viral infection and transposons. The protein is Dicer-like protein 1 (DCL1) of Chaetomium globosum (strain ATCC 6205 / CBS 148.51 / DSM 1962 / NBRC 6347 / NRRL 1970) (Soil fungus).